We begin with the raw amino-acid sequence, 413 residues long: Alpha-1-antiproteinase (413 aa).

Residues 1-24 (MTPSISWRLLLLAGLCCLVPSYLA) form the signal peptide. Position 33 is a phosphoserine (Ser33). N-linked (GlcNAc...) asparagine glycans are attached at residues Asn64, Asn101, and Asn265. Residues 368 to 387 (ATTIVEAVFMSLPPILHFNH) are RCL. Phosphoserine is present on Ser378.

It belongs to the serpin family. As to quaternary structure, interacts with CELA2A. Interacts with ERGIC3 and LMAN1/ERGIC53. Interacts with PRSS1/Trypsin.

The protein resides in the secreted. Functionally, inhibitor of serine proteases. The primary target is elastase, but also has a moderate affinity for plasmin and thrombin. This is Alpha-1-antiproteinase (Serpina1) from Mus saxicola (Brown spiny mouse).